A 443-amino-acid chain; its full sequence is Thymidine phosphorylase (443 aa).

Belongs to the thymidine/pyrimidine-nucleoside phosphorylase family. Homodimer.

The enzyme catalyses thymidine + phosphate = 2-deoxy-alpha-D-ribose 1-phosphate + thymine. The protein operates within pyrimidine metabolism; dTMP biosynthesis via salvage pathway; dTMP from thymine: step 1/2. Its function is as follows. The enzymes which catalyze the reversible phosphorolysis of pyrimidine nucleosides are involved in the degradation of these compounds and in their utilization as carbon and energy sources, or in the rescue of pyrimidine bases for nucleotide synthesis. This is Thymidine phosphorylase from Shewanella putrefaciens (strain CN-32 / ATCC BAA-453).